The sequence spans 360 residues: Magnesium-protoporphyrin IX monomethyl ester [oxidative] cyclase (360 aa).

Residues 1 to 21 (MPPTAVTEATAVPGSNVTTKD) are disordered.

It belongs to the AcsF family. Fe cation serves as cofactor.

It carries out the reaction Mg-protoporphyrin IX 13-monomethyl ester + 3 NADPH + 3 O2 + 2 H(+) = 3,8-divinyl protochlorophyllide a + 3 NADP(+) + 5 H2O. It functions in the pathway porphyrin-containing compound metabolism; chlorophyll biosynthesis (light-independent). Functionally, catalyzes the formation of the isocyclic ring in chlorophyll biosynthesis. Mediates the cyclase reaction, which results in the formation of divinylprotochlorophyllide (Pchlide) characteristic of all chlorophylls from magnesium-protoporphyrin IX 13-monomethyl ester (MgPMME). The chain is Magnesium-protoporphyrin IX monomethyl ester [oxidative] cyclase from Synechococcus sp. (strain CC9311).